The primary structure comprises 672 residues: Tubulin--tyrosine ligase-like protein 12 (672 aa).

The 339-residue stretch at 332-670 (KIKIFLQIFA…LDEIDPTKVT (339 aa)) folds into the TTL domain. Residues 480–483 (CEYI), Lys-499, and Asp-501 each bind ATP.

It belongs to the tubulin--tyrosine ligase family.

Regulates microtubule dynamics in uterine muscle cells. This chain is Tubulin--tyrosine ligase-like protein 12, found in Caenorhabditis briggsae.